The following is a 729-amino-acid chain: Neurochondrin (729 aa).

The residue at position 2 (Ser-2) is an N-acetylserine. Ser-2 carries the post-translational modification Phosphoserine. 2 S-palmitoyl cysteine lipidation sites follow: Cys-3 and Cys-4. The residue at position 75 (Arg-75) is an Asymmetric dimethylarginine. Ser-448 carries the post-translational modification Phosphoserine.

It belongs to the neurochondrin family. Interacts with MCHR1. Interacts with SEMA4C. Interacts with DIAPH1 (via FH3 domain). Interacts with GRM5. Palmitoylated. Palmitoylation by ZDHHC1, ZDHHC3 and ZDHHC11 regulates the association of NCDN with endosome membranes. May also be palmitoylated by ZDHHC7. Expressed in the neuronal, chondral and bone tissues. Expressed in dendrites. Enriched in the brain in the surface layer I-IV. In brains, protein level increases in male but decreases in female with advancing age (at protein level). In adult brains, it is highly expressed in the forebrain and hindbrain. Highly expressed in the hippocampus, piriform cortex, septum, amygdaloid complex, medial geniculate nucleus, inferior colliculus, cerebellar nuclei and the nuclei of the Vth, VIIth, and XIIth cranial nerves. In bone tissues, it is expressed in osteoblasts and osteocytes.

The protein resides in the cytoplasm. Its subcellular location is the cytosol. It is found in the endosome membrane. The protein localises to the cell projection. It localises to the dendrite. The protein resides in the postsynapse. Functionally, probably involved in signal transduction, in the nervous system, via increasing cell surface localization of GRM5 and positively regulating its signaling. Required for the spatial learning process. Acts as a negative regulator of Ca(2+)-calmodulin-dependent protein kinase 2 (CaMK2) phosphorylation. May play a role in modulating melanin-concentrating hormone-mediated functions via its interaction with MCHR1 that interferes with G protein-coupled signal transduction. May be involved in bone metabolism. May also be involved in neurite outgrowth. In Mus musculus (Mouse), this protein is Neurochondrin (Ncdn).